The sequence spans 492 residues: GDP-fucose protein O-fucosyltransferase 4 (492 aa).

Residues 1-7 lie on the Cytoplasmic side of the membrane; sequence MAAGPIR. The chain crosses the membrane as a helical; Signal-anchor for type II membrane protein span at residues 8–24; that stretch reads VVLVLLGVLSVCAASGH. The Lumenal portion of the chain corresponds to 25 to 492; the sequence is GSVAEREAGG…HEIFMKRQHL (468 aa). Residue asparagine 166 is glycosylated (N-linked (GlcNAc...) asparagine). The cysteines at positions 389 and 392 are disulfide-linked. The N-linked (GlcNAc...) asparagine glycan is linked to asparagine 443.

Belongs to the glycosyltransferase 10 family.

It is found in the endoplasmic reticulum membrane. The catalysed reaction is L-threonyl-[protein] + GDP-beta-L-fucose = 3-O-(alpha-L-fucosyl)-L-threonyl-[protein] + GDP + H(+). It catalyses the reaction L-seryl-[protein] + GDP-beta-L-fucose = 3-O-(alpha-L-fucosyl)-L-seryl-[protein] + GDP + H(+). Its pathway is protein modification; protein glycosylation. Protein O-fucosyltransferase that specifically catalyzes O-fucosylation of serine or threonine residues in EMI domains of target proteins, such as MMRN1, MMRN2 and EMID1. Attaches fucose through an O-glycosidic linkage. O-fucosylation of EMI domain-containing proteins may be required for facilitating protein folding and secretion. Also shows minor alpha-(1,3)-fucosyltransferase activity toward activity toward biantennary N-glycan acceptors. However, this was tested with a library of synthetic substrates and this activity is unsure in vivo. This Homo sapiens (Human) protein is GDP-fucose protein O-fucosyltransferase 4.